The following is a 295-amino-acid chain: Trimeric intracellular cation channel type 1B.1 (295 aa).

Residues Met1–Tyr27 lie on the Lumenal side of the membrane. The chain crosses the membrane as a helical span at residues Pro28 to Asp45. The Cytoplasmic portion of the chain corresponds to Leu46 to Lys56. A discontinuously helical membrane pass occupies residues His57 to Leu80. At Gly81–Lys89 the chain is on the lumenal side. The chain crosses the membrane as a helical span at residues Arg90 to Ala107. The Cytoplasmic segment spans residues Pro108–Thr119. Residues Pro120–Tyr148 traverse the membrane as a helical segment. Residues Lys129 and Arg133 each coordinate a 1,2-diacyl-sn-glycero-3-phospho-(1D-myo-inositol-4,5-bisphosphate). Residues Pro149–Asn150 lie on the Lumenal side of the membrane. The chain crosses the membrane as a discontinuously helical span at residues Ser151 to Arg177. Ser166 serves as a coordination point for a 1,2-diacyl-sn-glycero-3-phospho-(1D-myo-inositol-4,5-bisphosphate). At Gly178–Leu188 the chain is on the cytoplasmic side. A helical transmembrane segment spans residues Arg189–Gly210. The Lumenal segment spans residues Thr211 to Ala215. Residues Pro216–His239 traverse the membrane as a helical segment. Topologically, residues Val240–Gln295 are cytoplasmic. Residues Arg274 to Gln295 are disordered.

The protein belongs to the TMEM38 family. As to quaternary structure, homotrimer; trimerization probably requires binding to phosphatidylinositol 4,5-bisphosphate (PIP2).

The protein resides in the endoplasmic reticulum membrane. In terms of biological role, potassium channel that mediates transmembrane potassium transport. Might be required for maintenance of rapid intracellular calcium release. May act as a counter-ion channel that functions in synchronization with calcium release from intracellular stores. Binds phosphatidylinositol 4,5-bisphosphate (PIP2). This is Trimeric intracellular cation channel type 1B.1 from Caenorhabditis elegans.